The chain runs to 614 residues: Vitamin B12 transporter BtuB (614 aa).

An N-terminal signal peptide occupies residues Met1–Ala20. The short motif at Asp26 to Asn33 is the TonB box element. The region spanning Pro38–Thr152 is the TBDR plug domain. Cyanocob(III)alamin-binding positions include Leu83, Ser85, Asn92, and Val110–Ser111. The 460-residue stretch at Glu155–Phe614 folds into the TBDR beta-barrel domain. 3 consecutive transmembrane segments (beta stranded) span residues Thr158 to Gly165, Tyr169 to Gln178, and Thr184 to Thr195. Ca(2+)-binding residues include Asp199, Gln211, Asp213, and Asp215. 2 beta stranded membrane-spanning segments follow: residues Phe217–Glu227 and Asp232–Asn248. Residues Tyr249 and Asp250 each coordinate Ca(2+). Ala251 lines the cyanocob(III)alamin pocket. Asp261 provides a ligand contact to Ca(2+). Transmembrane regions (beta stranded) follow at residues Arg263–Asn277, Glu279–Asn296, Thr309–Ile325, His328–Trp337, Tyr353–Gly369, Phe371–Asp381, Phe385–Ile400, Tyr403–Asn417, Lys434–Glu443, Val449–Asn458, Tyr473–Phe490, Pro494–Ala509, Arg517–Trp529, and Asp535–Asp550. Thr309 contributes to the cyanocob(III)alamin binding site. Arg517 is a cyanocob(III)alamin binding site. Residue Tyr551 coordinates cyanocob(III)alamin. 3 beta stranded membrane passes run Thr558–Ala572, Ile585–Val596, and Ala602–Phe614. The TonB C-terminal box signature appears at Tyr597–Phe614.

Belongs to the TonB-dependent receptor family. BtuB (TC 1.B.14.3.1) subfamily.

It localises to the cell outer membrane. Functionally, involved in the active translocation of vitamin B12 (cyanocobalamin) across the outer membrane to the periplasmic space. It derives its energy for transport by interacting with the trans-periplasmic membrane protein TonB. This Escherichia coli O9:H4 (strain HS) protein is Vitamin B12 transporter BtuB.